Reading from the N-terminus, the 512-residue chain is 2-isopropylmalate synthase (512 aa).

One can recognise a Pyruvate carboxyltransferase domain in the interval 5-268 (LIIFDTTLRD…DLNIDTTHIV (264 aa)). Mn(2+) contacts are provided by D14, H202, H204, and N239. A regulatory domain region spans residues 394-512 (AFVSLSQHSE…SQAEKVAAQG (119 aa)).

It belongs to the alpha-IPM synthase/homocitrate synthase family. LeuA type 1 subfamily. As to quaternary structure, homodimer. It depends on Mn(2+) as a cofactor.

Its subcellular location is the cytoplasm. It catalyses the reaction 3-methyl-2-oxobutanoate + acetyl-CoA + H2O = (2S)-2-isopropylmalate + CoA + H(+). The protein operates within amino-acid biosynthesis; L-leucine biosynthesis; L-leucine from 3-methyl-2-oxobutanoate: step 1/4. In terms of biological role, catalyzes the condensation of the acetyl group of acetyl-CoA with 3-methyl-2-oxobutanoate (2-ketoisovalerate) to form 3-carboxy-3-hydroxy-4-methylpentanoate (2-isopropylmalate). This is 2-isopropylmalate synthase from Variovorax paradoxus (strain S110).